Consider the following 154-residue polypeptide: Lipoprotein signal peptidase (154 aa).

The next 2 membrane-spanning stretches (helical) occupy residues 55–75 (GHMW…IYIM) and 84–104 (LFSI…IDRV). Residues D111 and D129 contribute to the active site. A helical transmembrane segment spans residues 124-144 (IFNVADASLSVGVVLMLVYVF).

It belongs to the peptidase A8 family.

Its subcellular location is the cell membrane. The enzyme catalyses Release of signal peptides from bacterial membrane prolipoproteins. Hydrolyzes -Xaa-Yaa-Zaa-|-(S,diacylglyceryl)Cys-, in which Xaa is hydrophobic (preferably Leu), and Yaa (Ala or Ser) and Zaa (Gly or Ala) have small, neutral side chains.. It functions in the pathway protein modification; lipoprotein biosynthesis (signal peptide cleavage). Functionally, this protein specifically catalyzes the removal of signal peptides from prolipoproteins. The sequence is that of Lipoprotein signal peptidase from Listeria monocytogenes serovar 1/2a (strain ATCC BAA-679 / EGD-e).